We begin with the raw amino-acid sequence, 456 residues long: MLSRQFVRENPEVVREALDNKGVDVDLDRILDVDEEWRELKSRGDDLRHERNEVSSTIGELKQAGEEEAAQEAIERSQEVKSELQEIEERADELEAELEESLLELPQIPHESVPVGADESENVERRREGFDDLREVPDNVEPHYDLGEELEILDFERGAKVAGGGFYVAKGDGARLEHALIQFMLDVHREQDYRDVFPPIAVNSTSMRGTGQLPKFTEDAYRIEGTNEDAYDDDDLWLLPTAEVPVTNLHRDEILLGEDLPLKYQAYTPNFRQEAGEHGTETRGIVRVHQFNKVEMVNFVRPEESHERFEGLVDEAEEVLRRLELPYRILEMCTGDLGFTQAKKYDLEVWAPADDMDEGPAEGGRWLEVSSVSNFEEFQARRAGIRYREEHHESAEFLHTLNGSGLAVPRIVVAILEYYQNDDGTVTVPEALRPYMGGTEVIEGHDAVGETKLGGE.

Positions 49-69 are disordered; sequence HERNEVSSTIGELKQAGEEEA. 241-243 contributes to the L-serine binding site; sequence TAE. Residues 272–274 and V288 each bind ATP; that span reads RQE. E295 contributes to the L-serine binding site. ATP is bound at residue 368–371; the sequence is EVSS. S404 contacts L-serine.

Belongs to the class-II aminoacyl-tRNA synthetase family. Type-1 seryl-tRNA synthetase subfamily. Homodimer. The tRNA molecule binds across the dimer.

It is found in the cytoplasm. It carries out the reaction tRNA(Ser) + L-serine + ATP = L-seryl-tRNA(Ser) + AMP + diphosphate + H(+). The enzyme catalyses tRNA(Sec) + L-serine + ATP = L-seryl-tRNA(Sec) + AMP + diphosphate + H(+). The protein operates within aminoacyl-tRNA biosynthesis; selenocysteinyl-tRNA(Sec) biosynthesis; L-seryl-tRNA(Sec) from L-serine and tRNA(Sec): step 1/1. Functionally, catalyzes the attachment of serine to tRNA(Ser). Is also able to aminoacylate tRNA(Sec) with serine, to form the misacylated tRNA L-seryl-tRNA(Sec), which will be further converted into selenocysteinyl-tRNA(Sec). This is Serine--tRNA ligase from Halorubrum lacusprofundi (strain ATCC 49239 / DSM 5036 / JCM 8891 / ACAM 34).